The following is a 152-amino-acid chain: Transcriptional regulator MraZ (152 aa).

SpoVT-AbrB domains lie at 5-52 and 81-124; these read ASAI…PIHE and AHEC…DEAA.

Belongs to the MraZ family. Forms oligomers.

It is found in the cytoplasm. The protein localises to the nucleoid. The chain is Transcriptional regulator MraZ from Shewanella pealeana (strain ATCC 700345 / ANG-SQ1).